The primary structure comprises 681 residues: uncharacterized protein (681 aa).

Belongs to the protein kinase superfamily. ADCK protein kinase family.

This is an uncharacterized protein from Synechocystis sp. (strain ATCC 27184 / PCC 6803 / Kazusa).